A 72-amino-acid polypeptide reads, in one-letter code: Translation initiation factor IF-1 (72 aa).

The region spanning 1–72 is the S1-like domain; the sequence is MAKEDSIEMQ…SKGRIVFRSR (72 aa).

Belongs to the IF-1 family. Component of the 30S ribosomal translation pre-initiation complex which assembles on the 30S ribosome in the order IF-2 and IF-3, IF-1 and N-formylmethionyl-tRNA(fMet); mRNA recruitment can occur at any time during PIC assembly.

The protein resides in the cytoplasm. Its function is as follows. One of the essential components for the initiation of protein synthesis. Stabilizes the binding of IF-2 and IF-3 on the 30S subunit to which N-formylmethionyl-tRNA(fMet) subsequently binds. Helps modulate mRNA selection, yielding the 30S pre-initiation complex (PIC). Upon addition of the 50S ribosomal subunit IF-1, IF-2 and IF-3 are released leaving the mature 70S translation initiation complex. The sequence is that of Translation initiation factor IF-1 from Aeromonas hydrophila subsp. hydrophila (strain ATCC 7966 / DSM 30187 / BCRC 13018 / CCUG 14551 / JCM 1027 / KCTC 2358 / NCIMB 9240 / NCTC 8049).